Consider the following 138-residue polypeptide: ATP synthase epsilon chain (138 aa).

This sequence belongs to the ATPase epsilon chain family. In terms of assembly, F-type ATPases have 2 components, CF(1) - the catalytic core - and CF(0) - the membrane proton channel. CF(1) has five subunits: alpha(3), beta(3), gamma(1), delta(1), epsilon(1). CF(0) has three main subunits: a, b and c.

It localises to the cell inner membrane. Functionally, produces ATP from ADP in the presence of a proton gradient across the membrane. The protein is ATP synthase epsilon chain of Verminephrobacter eiseniae (strain EF01-2).